The primary structure comprises 103 residues: Small ribosomal subunit protein uS10 (103 aa).

This sequence belongs to the universal ribosomal protein uS10 family. In terms of assembly, part of the 30S ribosomal subunit.

Involved in the binding of tRNA to the ribosomes. This is Small ribosomal subunit protein uS10 from Chlorobaculum tepidum (strain ATCC 49652 / DSM 12025 / NBRC 103806 / TLS) (Chlorobium tepidum).